The primary structure comprises 337 residues: Casein kinase I isoform alpha (337 aa).

A Protein kinase domain is found at 17-285 (YKLVRKIGSG…YLRQLFRILF (269 aa)). ATP is bound by residues 23-31 (IGSGSFGDI) and lysine 46. Aspartate 136 (proton acceptor) is an active-site residue. Residues 309–325 (AASSSGQGQQAQTPTGK) are compositionally biased toward low complexity. A disordered region spans residues 309–337 (AASSSGQGQQAQTPTGKQTDKSKSNMKGF).

It belongs to the protein kinase superfamily. CK1 Ser/Thr protein kinase family. Casein kinase I subfamily. In terms of processing, autophosphorylated.

Its subcellular location is the cytoplasm. The protein localises to the cytoskeleton. It localises to the microtubule organizing center. It is found in the centrosome. The protein resides in the chromosome. Its subcellular location is the centromere. The protein localises to the kinetochore. It localises to the nucleus speckle. It is found in the cilium basal body. The protein resides in the spindle. It catalyses the reaction L-seryl-[protein] + ATP = O-phospho-L-seryl-[protein] + ADP + H(+). The catalysed reaction is L-threonyl-[protein] + ATP = O-phospho-L-threonyl-[protein] + ADP + H(+). Its function is as follows. Casein kinases are operationally defined by their preferential utilization of acidic proteins such as caseins as substrates. It can phosphorylate a large number of proteins. Participates in Wnt signaling. May play a role in segregating chromosomes during mitosis. May play a role in keratin cytoskeleton disassembly. The sequence is that of Casein kinase I isoform alpha (CSNK1A1) from Gallus gallus (Chicken).